The sequence spans 296 residues: UDP-N-acetylenolpyruvoylglucosamine reductase (296 aa).

Positions 19-203 (KVGGFAEYFS…LETTQKNLKK (185 aa)) constitute an FAD-binding PCMH-type domain. The active site involves Arg-166. Ser-217 serves as the catalytic Proton donor. Residue Glu-287 is part of the active site.

This sequence belongs to the MurB family. Requires FAD as cofactor.

The protein resides in the cytoplasm. The catalysed reaction is UDP-N-acetyl-alpha-D-muramate + NADP(+) = UDP-N-acetyl-3-O-(1-carboxyvinyl)-alpha-D-glucosamine + NADPH + H(+). Its pathway is cell wall biogenesis; peptidoglycan biosynthesis. Functionally, cell wall formation. The chain is UDP-N-acetylenolpyruvoylglucosamine reductase from Prochlorococcus marinus subsp. pastoris (strain CCMP1986 / NIES-2087 / MED4).